Here is a 417-residue protein sequence, read N- to C-terminus: Actin-related protein 10 (417 aa).

This sequence belongs to the actin family. In terms of assembly, subunit of dynactin, a multiprotein complex part of a tripartite complex with dynein and a adapter, such as BICDL1, BICD2 or HOOK3. The dynactin complex is built around ACTR1A/ACTB filament and consists of an actin-related filament composed of a shoulder domain, a pointed end and a barbed end. Its length is defined by its flexible shoulder domain. The soulder is composed of 2 DCTN1 subunits, 4 DCTN2 and 2 DCTN3. The 4 DCNT2 (via N-terminus) bind the ACTR1A filament and act as molecular rulers to determine the length. The pointed end is important for binding dynein-dynactin cargo adapters. Consists of 4 subunits: ACTR10, DCNT4, DCTN5 and DCTN6. The barbed end is composed of a CAPZA1:CAPZB heterodimers, which binds ACTR1A/ACTB filament and dynactin and stabilizes dynactin.

The protein localises to the cytoplasm. It localises to the cytoskeleton. Part of the dynactin complex that activates the molecular motor dynein for ultra-processive transport along microtubules. This chain is Actin-related protein 10 (ACTR10), found in Homo sapiens (Human).